A 293-amino-acid chain; its full sequence is MTSALHQSSIKSLPLLGRGKVRDMYAVGDDKLLIVASDRISAFDVILDDPIPGKGQVLTELTEFWLNKLAHILPNHSTGVRPEDVVAPDELDQVRGRAVVVKRLKPILVEAVARGYLIGSGWKDYQATGAVCGIALPAGLQQASKLPQPIFTPAAKAEFGMHDENVDFAHVVREVGQEMAERIRDVTLRLYTEAAQFAATKGIIIADTKFEFGLDDDGTLYLMDEVLTPDSSRFWPADGYRVGISPPSFDKQFVRDWLETQDWDKTPPAPRLPQEVLQKTAAKYREALDRLVA.

This sequence belongs to the SAICAR synthetase family.

It carries out the reaction 5-amino-1-(5-phospho-D-ribosyl)imidazole-4-carboxylate + L-aspartate + ATP = (2S)-2-[5-amino-1-(5-phospho-beta-D-ribosyl)imidazole-4-carboxamido]succinate + ADP + phosphate + 2 H(+). It functions in the pathway purine metabolism; IMP biosynthesis via de novo pathway; 5-amino-1-(5-phospho-D-ribosyl)imidazole-4-carboxamide from 5-amino-1-(5-phospho-D-ribosyl)imidazole-4-carboxylate: step 1/2. The chain is Phosphoribosylaminoimidazole-succinocarboxamide synthase from Bordetella petrii (strain ATCC BAA-461 / DSM 12804 / CCUG 43448).